A 122-amino-acid chain; its full sequence is Large ribosomal subunit protein uL14 (122 aa).

The protein belongs to the universal ribosomal protein uL14 family. Part of the 50S ribosomal subunit. Forms a cluster with proteins L3 and L19. In the 70S ribosome, L14 and L19 interact and together make contacts with the 16S rRNA in bridges B5 and B8.

Its function is as follows. Binds to 23S rRNA. Forms part of two intersubunit bridges in the 70S ribosome. In Leifsonia xyli subsp. xyli (strain CTCB07), this protein is Large ribosomal subunit protein uL14.